The sequence spans 22 residues: Bacteriocin serracin-P 23 kDa subunit (22 aa).

Functionally, major component of a prophage tail tube. Its function is as follows. Antibacterial activity against Gram-negative bacterium E.amylovora. The protein is Bacteriocin serracin-P 23 kDa subunit of Serratia plymuthica.